We begin with the raw amino-acid sequence, 282 residues long: Aldo-keto reductase MT3049 (282 aa).

Tyr-57 serves as the catalytic Proton donor. 9 residues coordinate NADPH: Leu-197, Val-235, Arg-237, Ser-238, Ala-239, Arg-243, Ser-246, Asn-247, and Arg-273.

It belongs to the aldo/keto reductase family.

The protein is Aldo-keto reductase MT3049 of Mycobacterium tuberculosis (strain CDC 1551 / Oshkosh).